Reading from the N-terminus, the 333-residue chain is 5-formaminoimidazole-4-carboxamide-1-(beta)-D-ribofuranosyl 5'-monophosphate synthetase (333 aa).

Histidine 21 and serine 84 together coordinate 5-amino-1-(5-phospho-beta-D-ribosyl)imidazole-4-carboxamide. In terms of domain architecture, ATP-grasp spans 118-313 (MELLAAAGIP…YFDEPMDMGE (196 aa)). ATP-binding positions include 141–187 (PVIV…VPAY) and glutamate 209. Asparagine 229 is a 5-amino-1-(5-phospho-beta-D-ribosyl)imidazole-4-carboxamide binding site. Mg(2+) is bound by residues glutamate 268 and glutamate 281.

This sequence belongs to the phosphohexose mutase family. The cofactor is Mg(2+). It depends on Mn(2+) as a cofactor.

The catalysed reaction is 5-amino-1-(5-phospho-beta-D-ribosyl)imidazole-4-carboxamide + formate + ATP = 5-formamido-1-(5-phospho-D-ribosyl)imidazole-4-carboxamide + ADP + phosphate. It participates in purine metabolism; IMP biosynthesis via de novo pathway; 5-formamido-1-(5-phospho-D-ribosyl)imidazole-4-carboxamide from 5-amino-1-(5-phospho-D-ribosyl)imidazole-4-carboxamide (formate route): step 1/1. In terms of biological role, catalyzes the ATP- and formate-dependent formylation of 5-aminoimidazole-4-carboxamide-1-beta-d-ribofuranosyl 5'-monophosphate (AICAR) to 5-formaminoimidazole-4-carboxamide-1-beta-d-ribofuranosyl 5'-monophosphate (FAICAR) in the absence of folates. The protein is 5-formaminoimidazole-4-carboxamide-1-(beta)-D-ribofuranosyl 5'-monophosphate synthetase of Pyrobaculum calidifontis (strain DSM 21063 / JCM 11548 / VA1).